The sequence spans 320 residues: Membrane protein insertase YidC 2 (320 aa).

The N-terminal stretch at 1–23 (MKNLKKKLTLTGLMTAGLLFLSG) is a signal peptide. Cys24 carries the N-palmitoyl cysteine lipid modification. The S-diacylglycerol cysteine moiety is linked to residue Cys24. The next 5 membrane-spanning stretches (helical) occupy residues 68–88 (YGWGIIFVTLIIRFLILPLGL), 142–162 (MLSSIGCLPMLIQWPFFIALY), 178–198 (GIPLGHPSVVLVIISGVLYFI), 217–237 (AMLIMSPAMIVVFSFMSPAGV), and 239–259 (LYWAVGGFVIVIQQIIITFIM). The segment at 270–320 (EFTKNPPKINNEGLKDVTPTSVQENFKEITSERNEKERKSGGRNAGKQNRK) is disordered. Over residues 294–309 (NFKEITSERNEKERKS) the composition is skewed to basic and acidic residues.

The protein belongs to the OXA1/ALB3/YidC family. Type 2 subfamily.

Its subcellular location is the cell membrane. Its function is as follows. Required for the insertion and/or proper folding and/or complex formation of integral membrane proteins into the membrane. Involved in integration of membrane proteins that insert both dependently and independently of the Sec translocase complex, as well as at least some lipoproteins. The sequence is that of Membrane protein insertase YidC 2 from Lactococcus lactis subsp. lactis (strain IL1403) (Streptococcus lactis).